Here is a 413-residue protein sequence, read N- to C-terminus: Lysosomal phospholipase A and acyltransferase (413 aa).

Residues 1–33 (MDRHLCICREIQLRSGLLFPFLLLMMLADLALP) form the signal peptide. D46 contacts substrate. A disulfide bridge links C65 with C89. A glycan (N-linked (GlcNAc...) asparagine) is linked at N99. Catalysis depends on S198, which acts as the Acyl-ester intermediate. S198 contributes to the Zn(2+) binding site. M199 is a substrate binding site. N-linked (GlcNAc...) asparagine glycans are attached at residues N273 and N289. C355 contributes to the Zn(2+) binding site. Residues D360 and H392 each act as charge relay system in the active site. H392 is a binding site for Zn(2+). N-linked (GlcNAc...) asparagine glycosylation occurs at N398.

This sequence belongs to the AB hydrolase superfamily. Lipase family. Post-translationally, N-glycosylated. N-glycosylation is important for maturation of the enzyme and normal subcellular location. As to expression, detected in alveolar macrophages (at protein level). Widely expressed. Expressed at highest levels in alveolar macrophages.

It localises to the lysosome. It is found in the secreted. The protein localises to the membrane. The enzyme catalyses a 1,2-diacyl-sn-glycero-3-phosphocholine + H2O = a 2-acyl-sn-glycero-3-phosphocholine + a fatty acid + H(+). The catalysed reaction is 1,2-dihexadecanoyl-sn-glycero-3-phosphocholine + H2O = 2-hexadecanoyl-sn-glycero-3-phosphocholine + hexadecanoate + H(+). It carries out the reaction 1-hexadecanoyl-2-(9Z-octadecenoyl)-sn-glycero-3-phosphocholine + H2O = 2-(9Z-octadecenoyl)-sn-glycero-3-phosphocholine + hexadecanoate + H(+). It catalyses the reaction 1,2-di-(9Z-octadecenoyl)-sn-glycero-3-phosphocholine + H2O = 2-(9Z-octadecenoyl)-sn-glycero-3-phosphocholine + (9Z)-octadecenoate + H(+). The enzyme catalyses 1-hexadecanoyl-2-glutaroyl-sn-glycero-3-phosphocholine + H2O = 2-glutaroyl-sn-glycero-3-phosphocholine + hexadecanoate + H(+). The catalysed reaction is 1-hexadecanoyl-2-nonadioyl-sn-glycero-3-phosphocholine + H2O = 2-nonadioyl-sn-glycero-3-phosphocholine + hexadecanoate + H(+). It carries out the reaction 1-hexadecanoyl-2-(5-oxopentanoyl)-sn-glycero-3-phosphocholine + H2O = 2-(5-oxopentanoyl)-sn-glycero-3-phosphocholine + hexadecanoate + H(+). It catalyses the reaction 1-hexadecanoyl-2-(9-oxononanoyl)-sn-glycero-3-phosphocholine + H2O = 2-(9-oxononanoyl)-sn-glycero-3-phosphocholine + hexadecanoate + H(+). The enzyme catalyses a 1,2-diacyl-sn-glycero-3-phosphocholine + H2O = a 1-acyl-sn-glycero-3-phosphocholine + a fatty acid + H(+). The catalysed reaction is 1,2-dihexadecanoyl-sn-glycero-3-phosphocholine + H2O = 1-hexadecanoyl-sn-glycero-3-phosphocholine + hexadecanoate + H(+). It carries out the reaction 1-hexadecanoyl-2-(9Z-octadecenoyl)-sn-glycero-3-phosphocholine + H2O = 1-hexadecanoyl-sn-glycero-3-phosphocholine + (9Z)-octadecenoate + H(+). It catalyses the reaction 1,2-di-(9Z-octadecenoyl)-sn-glycero-3-phosphocholine + H2O = 1-(9Z-octadecenoyl)-sn-glycero-3-phosphocholine + (9Z)-octadecenoate + H(+). The enzyme catalyses a 1-acyl-sn-glycero-3-phosphocholine + H2O = sn-glycerol 3-phosphocholine + a fatty acid + H(+). The catalysed reaction is 1-hexadecanoyl-sn-glycero-3-phosphocholine + H2O = sn-glycerol 3-phosphocholine + hexadecanoate + H(+). It carries out the reaction N-(acetyl)-sphing-4-enine + a 1,2-diacyl-sn-glycero-3-phosphoethanolamine = 1-O-acyl-N-(acetyl)-sphing-4-enine + a 2-acyl-sn-glycero-3-phosphoethanolamine. It catalyses the reaction 1-hexadecanoyl-2-(9Z-octadecenoyl)-sn-glycero-3-phosphoethanolamine + N-(acetyl)-sphing-4-enine = 2-(9Z-octadecenoyl)-sn-glycero-3-phosphoethanolamine + 1-hexadecanoyl-N-(acetyl)-sphing-4-enine. The enzyme catalyses 1-hexadecanoyl-2-(9Z,12Z-octadecadienoyl)-sn-glycero-3-phosphoethanolamine + N-(acetyl)-sphing-4-enine = 2-(9Z,12Z)-octadecadienoyl-sn-glycero-3-phosphoethanolamine + 1-hexadecanoyl-N-(acetyl)-sphing-4-enine. The catalysed reaction is 1-hexadecanoyl-2-(5Z,8Z,11Z,14Z-eicosatetraenoyl)-sn-glycero-3-phosphoethanolamine + N-(acetyl)-sphing-4-enine = 2-(5Z,8Z,11Z,14Z)-eicosatetraenoyl-sn-glycero-3-phosphoethanolamine + 1-hexadecanoyl-N-(acetyl)-sphing-4-enine. It carries out the reaction N-(acetyl)-sphing-4-enine + a 1,2-diacyl-sn-glycero-3-phosphoethanolamine = 1-O-acyl-N-(acetyl)-sphing-4-enine + a 1-acyl-sn-glycero-3-phosphoethanolamine. It catalyses the reaction 1-hexadecanoyl-2-(9Z-octadecenoyl)-sn-glycero-3-phosphoethanolamine + N-(acetyl)-sphing-4-enine = 1-(9Z-octadecenoyl)-N-(acetyl)-sphing-4-enine + 1-hexadecanoyl-sn-glycero-3-phosphoethanolamine. The enzyme catalyses 1-hexadecanoyl-2-(9Z,12Z-octadecadienoyl)-sn-glycero-3-phosphoethanolamine + N-(acetyl)-sphing-4-enine = 1-(9Z,12Z-octadecadienoyl)-N-acetylsphing-4-enine + 1-hexadecanoyl-sn-glycero-3-phosphoethanolamine. The catalysed reaction is 1-hexadecanoyl-2-(5Z,8Z,11Z,14Z-eicosatetraenoyl)-sn-glycero-3-phosphoethanolamine + N-(acetyl)-sphing-4-enine = 1-(5Z,8Z,11Z,14Z)-eicosatetraenoyl-N-(acetyl)-sphing-4-enine + 1-hexadecanoyl-sn-glycero-3-phosphoethanolamine. It carries out the reaction N-(acetyl)-sphing-4-enine + a 1,2-diacyl-sn-glycero-3-phosphocholine = 1-O-acyl-N-(acetyl)-sphing-4-enine + a 2-acyl-sn-glycero-3-phosphocholine. It catalyses the reaction 1-hexadecanoyl-2-(9Z-octadecenoyl)-sn-glycero-3-phosphocholine + N-(acetyl)-sphing-4-enine = 1-hexadecanoyl-N-(acetyl)-sphing-4-enine + 2-(9Z-octadecenoyl)-sn-glycero-3-phosphocholine. The enzyme catalyses 1-hexadecanoyl-2-(9Z,12Z-octadecadienoyl)-sn-glycero-3-phosphocholine + N-(acetyl)-sphing-4-enine = 2-(9Z,12Z-octadecadienoyl)-sn-glycero-3-phosphocholine + 1-hexadecanoyl-N-(acetyl)-sphing-4-enine. The catalysed reaction is 1-hexadecanoyl-2-(5Z,8Z,11Z,14Z-eicosatetraenoyl)-sn-glycero-3-phosphocholine + N-(acetyl)-sphing-4-enine = 1-hexadecanoyl-N-(acetyl)-sphing-4-enine + 2-(5Z,8Z,11Z,14Z)-eicosatetraenoyl-sn-glycero-3-phosphocholine. It carries out the reaction 1-hexadecanoyl-2-(4Z,7Z,10Z,13Z,16Z,19Z-docosahexaenoyl)-sn-glycero-3-phosphocholine + N-(acetyl)-sphing-4-enine = 2-(4Z,7Z,10Z,13Z,16Z,19Z-docosahexaenoyl)-sn-glycero-3-phosphocholine + 1-hexadecanoyl-N-(acetyl)-sphing-4-enine. It catalyses the reaction 1-hexadecanoyl-2-nonadioyl-sn-glycero-3-phosphocholine + N-(acetyl)-sphing-4-enine = 2-nonadioyl-sn-glycero-3-phosphocholine + 1-hexadecanoyl-N-(acetyl)-sphing-4-enine. The enzyme catalyses 1-octadecanoyl-2-(9Z-octadecenoyl)-sn-glycero-3-phosphocholine + N-(acetyl)-sphing-4-enine = 1-octadecanoyl-N-(acetyl)-sphing-4-enine + 2-(9Z-octadecenoyl)-sn-glycero-3-phosphocholine. The catalysed reaction is 1-(9Z)-octadecenoyl-2-octadecanoyl-sn-glycero-3-phosphocholine + N-(acetyl)-sphing-4-enine = 2-octadecanoyl-sn-glycero-3-phosphocholine + 1-(9Z-octadecenoyl)-N-(acetyl)-sphing-4-enine. It carries out the reaction 1-octadecanoyl-2-(5Z,8Z,11Z,14Z-eicosatetraenoyl)-sn-glycero-3-phosphocholine + N-(acetyl)-sphing-4-enine = 1-octadecanoyl-N-(acetyl)-sphing-4-enine + 2-(5Z,8Z,11Z,14Z)-eicosatetraenoyl-sn-glycero-3-phosphocholine. It catalyses the reaction 1-(9Z-octadecenoyl)-2-hexadecanoyl-sn-glycero-3-phosphocholine + N-(acetyl)-sphing-4-enine = 1-(9Z-octadecenoyl)-N-(acetyl)-sphing-4-enine + 2-hexadecanoyl-sn-glycero-3-phosphocholine. The enzyme catalyses N-(acetyl)-sphing-4-enine + a 1,2-diacyl-sn-glycero-3-phosphocholine = 1-O-acyl-N-(acetyl)-sphing-4-enine + a 1-acyl-sn-glycero-3-phosphocholine. The catalysed reaction is 1-hexadecanoyl-2-(9Z-octadecenoyl)-sn-glycero-3-phosphocholine + N-(acetyl)-sphing-4-enine = 1-(9Z-octadecenoyl)-N-(acetyl)-sphing-4-enine + 1-hexadecanoyl-sn-glycero-3-phosphocholine. It carries out the reaction 1-hexadecanoyl-2-(9Z,12Z-octadecadienoyl)-sn-glycero-3-phosphocholine + N-(acetyl)-sphing-4-enine = 1-(9Z,12Z-octadecadienoyl)-N-acetylsphing-4-enine + 1-hexadecanoyl-sn-glycero-3-phosphocholine. It catalyses the reaction 1-hexadecanoyl-2-(5Z,8Z,11Z,14Z-eicosatetraenoyl)-sn-glycero-3-phosphocholine + N-(acetyl)-sphing-4-enine = 1-(5Z,8Z,11Z,14Z)-eicosatetraenoyl-N-(acetyl)-sphing-4-enine + 1-hexadecanoyl-sn-glycero-3-phosphocholine. The enzyme catalyses 1-hexadecanoyl-2-(4Z,7Z,10Z,13Z,16Z,19Z-docosahexaenoyl)-sn-glycero-3-phosphocholine + N-(acetyl)-sphing-4-enine = 1-(4Z,7Z,10Z,13Z,16Z,19Z-docosahexaenoyl)-N-(acetyl)-sphing-4-enine + 1-hexadecanoyl-sn-glycero-3-phosphocholine. The catalysed reaction is 1-octadecanoyl-2-(9Z-octadecenoyl)-sn-glycero-3-phosphocholine + N-(acetyl)-sphing-4-enine = 1-(9Z-octadecenoyl)-N-(acetyl)-sphing-4-enine + 1-octadecanoyl-sn-glycero-3-phosphocholine. It carries out the reaction 1-octadecanoyl-2-(9Z,12Z)-octadecadienoyl-sn-glycero-3-phosphocholine + N-(acetyl)-sphing-4-enine = 1-(9Z,12Z-octadecadienoyl)-N-acetylsphing-4-enine + 1-octadecanoyl-sn-glycero-3-phosphocholine. It catalyses the reaction 1-(9Z-octadecenoyl)-2-hexadecanoyl-sn-glycero-3-phosphocholine + N-(acetyl)-sphing-4-enine = 1-hexadecanoyl-N-(acetyl)-sphing-4-enine + 1-(9Z-octadecenoyl)-sn-glycero-3-phosphocholine. The enzyme catalyses 1-(9Z)-octadecenoyl-2-octadecanoyl-sn-glycero-3-phosphocholine + N-(acetyl)-sphing-4-enine = 1-octadecanoyl-N-(acetyl)-sphing-4-enine + 1-(9Z-octadecenoyl)-sn-glycero-3-phosphocholine. The catalysed reaction is 1,2-di-(9Z-octadecenoyl)-sn-glycero-3-phosphocholine + N-(acetyl)-sphing-4-enine = 1-(9Z-octadecenoyl)-N-(acetyl)-sphing-4-enine + 1-(9Z-octadecenoyl)-sn-glycero-3-phosphocholine. It carries out the reaction 1-octadecanoyl-2-(5Z,8Z,11Z,14Z-eicosatetraenoyl)-sn-glycero-3-phosphocholine + N-(acetyl)-sphing-4-enine = 1-(5Z,8Z,11Z,14Z)-eicosatetraenoyl-N-(acetyl)-sphing-4-enine + 1-octadecanoyl-sn-glycero-3-phosphocholine. It catalyses the reaction a 1,2-diacyl-sn-glycero-3-phospho-L-serine + N-(acetyl)-sphing-4-enine = a 2-acyl-sn-glycero-3-phospho-L-serine + 1-O-acyl-N-(acetyl)-sphing-4-enine. The enzyme catalyses 1-octadecanoyl-2-(9Z-octadecenoyl)-sn-glycero-3-phospho-L-serine + N-(acetyl)-sphing-4-enine = 2-(9Z-octadecenoyl)-sn-glycero-3-phospho-L-serine + 1-octadecanoyl-N-(acetyl)-sphing-4-enine. The catalysed reaction is a 1,2-diacyl-sn-glycero-3-phospho-L-serine + N-(acetyl)-sphing-4-enine = 1-O-acyl-N-(acetyl)-sphing-4-enine + a 1-acyl-sn-glycero-3-phospho-L-serine. It carries out the reaction 1-octadecanoyl-2-(9Z-octadecenoyl)-sn-glycero-3-phospho-L-serine + N-(acetyl)-sphing-4-enine = 1-octadecanoyl-sn-glycero-3-phosphoserine + 1-(9Z-octadecenoyl)-N-(acetyl)-sphing-4-enine. It catalyses the reaction a 1,2-diacyl-sn-glycero-3-phospho-(1'-sn-glycerol) + N-(acetyl)-sphing-4-enine = 2-acyl-sn-glycero-3-phospho-(1'-sn-glycerol) + 1-O-acyl-N-(acetyl)-sphing-4-enine. The enzyme catalyses 1-octadecanoyl-2-(9Z-octadecenoyl)-sn-glycero-3-phospho-(1'-sn-glycerol) + N-(acetyl)-sphing-4-enine = 2-(9Z-octadecenoyl)-sn-glycero-3-phospho-(1'-sn-glycerol) + 1-octadecanoyl-N-(acetyl)-sphing-4-enine. The catalysed reaction is a 1,2-diacyl-sn-glycero-3-phospho-(1'-sn-glycerol) + N-(acetyl)-sphing-4-enine = 1-O-acyl-N-(acetyl)-sphing-4-enine + 1-acyl-sn-glycero-3-phospho-(1'-sn-glycerol). It carries out the reaction 1-octadecanoyl-2-(9Z-octadecenoyl)-sn-glycero-3-phospho-(1'-sn-glycerol) + N-(acetyl)-sphing-4-enine = 1-octadecanoyl-sn-glycero-3-phospho-(1'-sn-glycerol) + 1-(9Z-octadecenoyl)-N-(acetyl)-sphing-4-enine. It catalyses the reaction an N-acylethanolamine + a 1,2-diacyl-sn-glycero-3-phosphocholine = 2-(acylamino)ethyl fatty acid + a 2-acyl-sn-glycero-3-phosphocholine. The enzyme catalyses an N-acylethanolamine + a 1,2-diacyl-sn-glycero-3-phosphocholine = 2-(acylamino)ethyl fatty acid + a 1-acyl-sn-glycero-3-phosphocholine. The catalysed reaction is N-(5Z,8Z,11Z,14Z-eicosatetraenoyl)-ethanolamine + 1,2-di-(9Z-octadecenoyl)-sn-glycero-3-phosphocholine = 2-[(5Z,8Z,11Z,14Z)-eicosatetraenoylamino]ethyl (9Z)-octadecenoate + (9Z-octadecenoyl)-sn-glycero-3-phosphocholine. It carries out the reaction N-(9Z-octadecenoyl) ethanolamine + 1,2-di-(9Z-octadecenoyl)-sn-glycero-3-phosphocholine = 2-[(9Z)-octadecenoylamino]ethyl (9Z)-octadecenoate + (9Z-octadecenoyl)-sn-glycero-3-phosphocholine. It catalyses the reaction a 3-acyl-sn-glycerol + a 1,2-diacyl-sn-glycero-3-phosphocholine = a 1,3-diacylglycerol + a 1-acyl-sn-glycero-3-phosphocholine. The enzyme catalyses a 3-acyl-sn-glycerol + a 1,2-diacyl-sn-glycero-3-phosphocholine = a 1,3-diacylglycerol + a 2-acyl-sn-glycero-3-phosphocholine. The catalysed reaction is 3-(9Z-octadecenoyl)-sn-glycerol + 1,2-di-(9Z-octadecenoyl)-sn-glycero-3-phosphocholine = 1,3-di-(9Z-octadecenoyl)-glycerol + (9Z-octadecenoyl)-sn-glycero-3-phosphocholine. It carries out the reaction 3-hexadecanoyl-sn-glycerol + 1,2-di-(9Z-octadecenoyl)-sn-glycero-3-phosphocholine = 1-(9Z)-octadecenoyl-3-hexadecanoyl-sn-glycerol + (9Z-octadecenoyl)-sn-glycero-3-phosphocholine. It catalyses the reaction a 1-acyl-sn-glycerol + a 1,2-diacyl-sn-glycero-3-phosphocholine = a 1,3-diacylglycerol + a 2-acyl-sn-glycero-3-phosphocholine. The enzyme catalyses a 1-acyl-sn-glycerol + a 1,2-diacyl-sn-glycero-3-phosphocholine = a 1,3-diacylglycerol + a 1-acyl-sn-glycero-3-phosphocholine. The catalysed reaction is 1-(9Z-octadecenoyl)-sn-glycerol + 1,2-di-(9Z-octadecenoyl)-sn-glycero-3-phosphocholine = 1,3-di-(9Z-octadecenoyl)-glycerol + (9Z-octadecenoyl)-sn-glycero-3-phosphocholine. It carries out the reaction 1-hexadecanoyl-sn-glycerol + 1,2-di-(9Z-octadecenoyl)-sn-glycero-3-phosphocholine = 1-hexadecanoyl-3-(9Z)-octadecenoyl-sn-glycerol + (9Z-octadecenoyl)-sn-glycero-3-phosphocholine. It catalyses the reaction a 2-acylglycerol + a 1,2-diacyl-sn-glycero-3-phosphocholine = a 1,2-diacylglycerol + a 2-acyl-sn-glycero-3-phosphocholine. The enzyme catalyses a 2-acylglycerol + a 1,2-diacyl-sn-glycero-3-phosphocholine = a 1,2-diacylglycerol + a 1-acyl-sn-glycero-3-phosphocholine. The catalysed reaction is 2-hexadecanoylglycerol + 1,2-di-(9Z-octadecenoyl)-sn-glycero-3-phosphocholine = 1-(9Z)-octadecenoyl-2-hexadecanoylglycerol + (9Z-octadecenoyl)-sn-glycero-3-phosphocholine. It carries out the reaction 1-O-alkylglycerol + a 1,2-diacyl-sn-glycero-3-phosphocholine = 1-O-alkyl-3-acylglycerol + a 1-acyl-sn-glycero-3-phosphocholine. It catalyses the reaction 1-O-alkylglycerol + a 1,2-diacyl-sn-glycero-3-phosphocholine = 1-O-alkyl-3-acylglycerol + a 2-acyl-sn-glycero-3-phosphocholine. The enzyme catalyses 1-O-hexadecylglycerol + 1,2-di-(9Z-octadecenoyl)-sn-glycero-3-phosphocholine = 1-O-hexadecyl-3-(9Z)-octadecenoylglycerol + (9Z-octadecenoyl)-sn-glycero-3-phosphocholine. The catalysed reaction is 1-O-alkyl-2-acyl-sn-glycerol + a 1,2-diacyl-sn-glycero-3-phosphocholine = 1-O-alkyl-2,3-diacyl-sn-glycerol + a 2-acyl-sn-glycero-3-phosphocholine. It carries out the reaction 1-O-alkyl-2-acyl-sn-glycerol + a 1,2-diacyl-sn-glycero-3-phosphocholine = 1-O-alkyl-2,3-diacyl-sn-glycerol + a 1-acyl-sn-glycero-3-phosphocholine. It catalyses the reaction 1-O-hexadecyl-2-acetyl-sn-glycerol + 1,2-di-(9Z-octadecenoyl)-sn-glycero-3-phosphocholine = 1-O-hexadecyl-2-acetyl-3-(9Z)-octadecenoyl-sn-glycerol + (9Z-octadecenoyl)-sn-glycero-3-phosphocholine. The enzyme catalyses 1-O-hexadecyl-2-O-methyl-sn-glycerol + 1,2-di-(9Z-octadecenoyl)-sn-glycero-3-phosphocholine = 1-O-hexadecyl-2-O-methyl-3-(9Z)-octadecenoyl-sn-glycerol + (9Z-octadecenoyl)-sn-glycero-3-phosphocholine. The catalysed reaction is a 1,2-diacyl-sn-glycero-3-phosphoethanolamine + H2O = a 1-acyl-sn-glycero-3-phosphoethanolamine + a fatty acid + H(+). It carries out the reaction 1-acyl-2-(5Z,8Z,11Z,14Z)-eicosatetraenoyl-sn-glycero-3-phosphoethanolamine + H2O = a 1-acyl-sn-glycero-3-phosphoethanolamine + (5Z,8Z,11Z,14Z)-eicosatetraenoate + H(+). It catalyses the reaction a 1,2-diacyl-sn-glycero-3-phospho-(1'-sn-glycerol) + H2O = 1-acyl-sn-glycero-3-phospho-(1'-sn-glycerol) + a fatty acid + H(+). The enzyme catalyses 1-hexadecanoyl-2-(9Z-octadecenoyl)-sn-glycero-3-phospho-(1'-sn-glycerol) + H2O = 1-hexadecanoyl-sn-glycero-3-phospho-(1'-sn-glycerol) + (9Z)-octadecenoate + H(+). The catalysed reaction is a 1,2-diacyl-sn-glycero-3-phospho-(1'-sn-glycerol) + H2O = 2-acyl-sn-glycero-3-phospho-(1'-sn-glycerol) + a fatty acid + H(+). It carries out the reaction 1-hexadecanoyl-2-(9Z-octadecenoyl)-sn-glycero-3-phospho-(1'-sn-glycerol) + H2O = 2-(9Z-octadecenoyl)-sn-glycero-3-phospho-(1'-sn-glycerol) + hexadecanoate + H(+). With respect to regulation, transacylase activity is inhibited by MJ33. Has dual calcium-independent phospholipase and O-acyltransferase activities with a potential role in glycerophospholipid homeostasis and remodeling of acyl groups of lipophilic alcohols present in acidic cellular compartments. Catalyzes hydrolysis of the ester bond of the fatty acyl group attached at sn-1 or sn-2 position of phospholipids (phospholipase A1 or A2 activity) and transfer it to the hydroxyl group at the first carbon of lipophilic alcohols (O-acyltransferase activity). Among preferred fatty acyl donors are phosphatidylcholines, phosphatidylethanolamines, phosphatidylglycerols and phosphatidylserines. Favors sn-2 over sn-1 deacylation of unsaturated fatty acyl groups of phosphatidylcholines, phosphatidylethanolamines, and phosphatidylglycerols. Among preferred fatty acyl acceptors are natural lipophilic alcohols including short-chain ceramide N-acetyl-sphingosine (C2 ceramide), alkylacylglycerols, monoacylglycerols, and acylethanolamides such as anandamide and oleoylethanolamide. Selectively hydrolyzes the sn-1 fatty acyl group of truncated oxidized phospholipids and may play a role in detoxification of reactive oxidized phospholipids during oxidative stress. Required for normal phospholipid degradation in alveolar macrophages with potential implications in the clearance of pulmonary surfactant, which is mainly composed of dipalmitoylphosphatidylcholine (1,2-dihexadecanoyl-sn-glycero-3-phosphocholine). Involved in the first step of bis(monoacylglycero)phosphate (BMP) de novo synthesis from phosphatidylglycerol (1,2-diacyl-sn-glycero-3-phospho-(1'-sn-glycerol), PG). BMP is an important player in cargo sorting and degradation, regulation of cellular cholesterol levels and intercellular communication. At neutral pH, hydrolyzes the sn-1 fatty acyl group of the lysophosphatidylcholines. This Rattus norvegicus (Rat) protein is Lysosomal phospholipase A and acyltransferase (Pla2g15).